The following is a 474-amino-acid chain: MFEVVIGLEVHTQLNTKTKIFCSCSTSFGDEANTHVCPTCLALPGALPVLNKEAVKKAISFGTAINAKINKKSVFNRKNYFYPDLPKAYQISQFEIPIVEGGELIIDVNGEKKRIGITRAHLEEDAGKNIHESDHSLVDLNRAGTPLLEIVSEPDLRSSDEAVAYLKKLHSILRFLNISDANMQEGSFRCDANVSIRPKGDSKLYTRVEIKNLNSFKFIQKAIDYEVERQSAAWEDGKYDEEVYQETRLFDTTNLVTRSMRGKEDSAEYRYFPDPDLLPVLVDKAMYDEAIKIPELADEKVVRYQKEFGVKEDDALNLVSTIEMSRYFEDLVNSKISPKLCVTWLLVELNGRLKNGVTIETSPINSAKMIEFLKRIEDGTISGKAGKEVLDYLMEHPSEDVDAVIEKLGLKQVSDDSAIVAIIDQILAANADKVAEYKAGKDKMFGFFVGQVMKEGKGAFNPAKVNELLKSRLA.

The protein belongs to the GatB/GatE family. GatB subfamily. As to quaternary structure, heterotrimer of A, B and C subunits.

The catalysed reaction is L-glutamyl-tRNA(Gln) + L-glutamine + ATP + H2O = L-glutaminyl-tRNA(Gln) + L-glutamate + ADP + phosphate + H(+). It carries out the reaction L-aspartyl-tRNA(Asn) + L-glutamine + ATP + H2O = L-asparaginyl-tRNA(Asn) + L-glutamate + ADP + phosphate + 2 H(+). Allows the formation of correctly charged Asn-tRNA(Asn) or Gln-tRNA(Gln) through the transamidation of misacylated Asp-tRNA(Asn) or Glu-tRNA(Gln) in organisms which lack either or both of asparaginyl-tRNA or glutaminyl-tRNA synthetases. The reaction takes place in the presence of glutamine and ATP through an activated phospho-Asp-tRNA(Asn) or phospho-Glu-tRNA(Gln). This is Aspartyl/glutamyl-tRNA(Asn/Gln) amidotransferase subunit B from Campylobacter curvus (strain 525.92).